A 606-amino-acid chain; its full sequence is Serine/threonine-protein kinase A-Raf (606 aa).

Positions Gly19–Leu91 constitute an RBD domain. The segment at Met98–Cys144 adopts a Phorbol-ester/DAG-type zinc-finger fold. Zn(2+)-binding residues include His99, Cys112, Cys115, Cys125, Cys128, His133, Cys136, and Cys144. A phosphoserine mark is found at Ser157 and Ser162. Residues Asp160 to Leu207 are disordered. Thr181 bears the Phosphothreonine mark. Ser186 and Ser214 each carry phosphoserine. The interval Ser240 to Lys290 is disordered. Thr253 is modified (phosphothreonine). Residues Ser257 and Ser269 each carry the phosphoserine modification. Basic and acidic residues predominate over residues Ser274–Lys289. Residues Val310 to Leu570 enclose the Protein kinase domain. ATP contacts are provided by residues Ile316 to Val324 and Lys336. Phosphothreonine is present on Thr318. The active-site Proton acceptor is Asp429.

It belongs to the protein kinase superfamily. TKL Ser/Thr protein kinase family. RAF subfamily. Interacts with TH1L/NELFD. The cofactor is Zn(2+). Dephosphorylation of Ser-214 by the SHOC2-MRAS-PP1c (SMP) complex consisting of SHOC2, GTP-bound M-Ras/MRAS and the catalytic subunit of protein phosphatase 1 (PPP1CA, PPP1CB or PPP1CC); this relieves inactivation and stimulates kinase activity. As to expression, predominantly in urogenital tissues.

It carries out the reaction L-seryl-[protein] + ATP = O-phospho-L-seryl-[protein] + ADP + H(+). It catalyses the reaction L-threonyl-[protein] + ATP = O-phospho-L-threonyl-[protein] + ADP + H(+). Its function is as follows. Involved in the transduction of mitogenic signals from the cell membrane to the nucleus. May also regulate the TOR signaling cascade. Phosphorylates PFKFB2. Serves as a positive regulator of myogenic differentiation by inducing cell cycle arrest, the expression of myogenin and other muscle-specific proteins, and myotube formation. The sequence is that of Serine/threonine-protein kinase A-Raf (ARAF) from Homo sapiens (Human).